The chain runs to 254 residues: Receptor expression-enhancing protein 2 (254 aa).

2 helical membrane-spanning segments follow: residues 1–21 (MVSWIISRLVVLIFGTLYPAY) and 35–55 (YVKWMMYWIVFAFFTTAETLT). Ser-152 is modified (phosphoserine). The tract at residues 194-254 (LSLRSSTSQP…KKSSGGGDSA (61 aa)) is disordered. A compositionally biased stretch (basic and acidic residues) spans 205–219 (PRTETSEDDLGDKAP).

It belongs to the DP1 family. As to quaternary structure, interacts with odorant receptor proteins.

The protein localises to the membrane. Its function is as follows. Required for endoplasmic reticulum (ER) network formation, shaping and remodeling. May enhance the cell surface expression of odorant receptors. The polypeptide is Receptor expression-enhancing protein 2 (Reep2) (Mus musculus (Mouse)).